We begin with the raw amino-acid sequence, 483 residues long: BTB/POZ domain and ankyrin repeat-containing protein COCH (483 aa).

The BTB domain maps to 25–105; the sequence is SDVVFSVEGR…LYSGQVSIVP (81 aa). The C2HC NPR-type zinc finger occupies 111–125; it reads RPNCGDRGCWHTHCT. Zn(2+) is bound by residues Cys-114, Cys-119, His-121, and Cys-124. 4 ANK repeats span residues 249–278, 279–308, 313–342, and 346–380; these read QKIR…LNLD, EALA…DVNF, TGKT…DPNV, and DGVT…KLRL. Disordered stretches follow at residues 395–435 and 450–483; these read EEGN…NSNM and MSTS…SHDY. A compositionally biased stretch (low complexity) spans 398 to 414; the sequence is NNNNNANNNNTGSSATN. Residues 456–465 are compositionally biased toward basic and acidic residues; that stretch reads DSGDDDHNSN.

This sequence belongs to the plant 'ANKYRIN-BTB/POZ' family. 'NOOT-BOP-COCH-like' (NBCL) subfamily. In terms of assembly, homodimer.

The protein localises to the nucleus. It is found in the cytoplasm. Its subcellular location is the cell membrane. It participates in protein modification; protein ubiquitination. Its function is as follows. May act as a substrate-specific adapter of an E3 ubiquitin-protein ligase complex (CUL3-RBX1-BTB) which mediates the ubiquitination and subsequent proteasomal degradation of target proteins. Transcriptional co-regulator involved in the promotion of leaf and floral meristem fate and determinacy. Promotes normal stipule growth and development. Required for the abscission of senescent organs, probably by regulating the cell wall disorganization in abscission zones (AZs, e.g. pulvini at the base of leaves). Down-regulates UNI expression in primordia of leaves and secondary inflorescences, and thereby controls their sizes and/or structures. Involved in the coordination of the symbiotic nodule developmental program. Promotes the formation of root nodules by interacting directly with APP1 to modulate the expression of the nuclear transcription factor Y subunit (NF-YA1), a key nodulin. Necessary for the robust maintenance of nodule identity throughout the nodule developmental program. This chain is BTB/POZ domain and ankyrin repeat-containing protein COCH, found in Pisum sativum (Garden pea).